Consider the following 74-residue polypeptide: Small ribosomal subunit protein bS18 (74 aa).

This sequence belongs to the bacterial ribosomal protein bS18 family. Part of the 30S ribosomal subunit. Forms a tight heterodimer with protein bS6.

Its function is as follows. Binds as a heterodimer with protein bS6 to the central domain of the 16S rRNA, where it helps stabilize the platform of the 30S subunit. The polypeptide is Small ribosomal subunit protein bS18 (Zymomonas mobilis subsp. mobilis (strain ATCC 31821 / ZM4 / CP4)).